The primary structure comprises 210 residues: 3-hydroxy-3-methylglutaryl-coenzyme A reductase 2 (210 aa).

Active-site charge relay system residues include lysine 21 and aspartate 97. The chain crosses the membrane as a helical span at residues 166–186; that stretch reads LLATIVAGSVLAGELSLMSAI. The active-site Proton donor is the histidine 195. N-linked (GlcNAc...) asparagine glycosylation occurs at asparagine 199.

Belongs to the HMG-CoA reductase family.

Its subcellular location is the endoplasmic reticulum membrane. The protein localises to the mitochondrion membrane. It localises to the plastid membrane. It catalyses the reaction (R)-mevalonate + 2 NADP(+) + CoA = (3S)-3-hydroxy-3-methylglutaryl-CoA + 2 NADPH + 2 H(+). It participates in metabolic intermediate biosynthesis; (R)-mevalonate biosynthesis; (R)-mevalonate from acetyl-CoA: step 3/3. Functionally, catalyzes the synthesis of mevalonate. The specific precursor of all isoprenoid compounds present in plants. The polypeptide is 3-hydroxy-3-methylglutaryl-coenzyme A reductase 2 (HMGR2) (Hevea brasiliensis (Para rubber tree)).